The primary structure comprises 262 residues: Pyridoxine 5'-phosphate synthase (262 aa).

3-amino-2-oxopropyl phosphate is bound at residue Asn6. A 1-deoxy-D-xylulose 5-phosphate-binding site is contributed by 8–9 (DH). Arg17 provides a ligand contact to 3-amino-2-oxopropyl phosphate. His43 serves as the catalytic Proton acceptor. The 1-deoxy-D-xylulose 5-phosphate site is built by Arg45 and His50. Glu70 (proton acceptor) is an active-site residue. Position 102 (Thr102) interacts with 1-deoxy-D-xylulose 5-phosphate. His215 serves as the catalytic Proton donor. 3-amino-2-oxopropyl phosphate contacts are provided by residues Gly216 and 237–238 (GH).

Belongs to the PNP synthase family. As to quaternary structure, homooctamer; tetramer of dimers.

The protein localises to the cytoplasm. The catalysed reaction is 3-amino-2-oxopropyl phosphate + 1-deoxy-D-xylulose 5-phosphate = pyridoxine 5'-phosphate + phosphate + 2 H2O + H(+). It participates in cofactor biosynthesis; pyridoxine 5'-phosphate biosynthesis; pyridoxine 5'-phosphate from D-erythrose 4-phosphate: step 5/5. Its function is as follows. Catalyzes the complicated ring closure reaction between the two acyclic compounds 1-deoxy-D-xylulose-5-phosphate (DXP) and 3-amino-2-oxopropyl phosphate (1-amino-acetone-3-phosphate or AAP) to form pyridoxine 5'-phosphate (PNP) and inorganic phosphate. This chain is Pyridoxine 5'-phosphate synthase, found in Helicobacter acinonychis (strain Sheeba).